The primary structure comprises 368 residues: 3-dehydroquinate synthase (368 aa).

NAD(+) is bound by residues 69-74 (DGEAYK), 103-107 (GVIGD), 127-128 (TT), Lys140, and Lys149. The Zn(2+) site is built by Glu182, His245, and His262.

Belongs to the sugar phosphate cyclases superfamily. Dehydroquinate synthase family. The cofactor is Co(2+). Zn(2+) is required as a cofactor. Requires NAD(+) as cofactor.

The protein resides in the cytoplasm. The enzyme catalyses 7-phospho-2-dehydro-3-deoxy-D-arabino-heptonate = 3-dehydroquinate + phosphate. It participates in metabolic intermediate biosynthesis; chorismate biosynthesis; chorismate from D-erythrose 4-phosphate and phosphoenolpyruvate: step 2/7. Its function is as follows. Catalyzes the conversion of 3-deoxy-D-arabino-heptulosonate 7-phosphate (DAHP) to dehydroquinate (DHQ). The chain is 3-dehydroquinate synthase from Pseudomonas aeruginosa (strain UCBPP-PA14).